The chain runs to 694 residues: Elongation factor G (694 aa).

The 280-residue stretch at 8–287 (EDYRNFGIMA…AVVSYLPSPI (280 aa)) folds into the tr-type G domain. GTP contacts are provided by residues 17–24 (AHIDAGKT), 86–90 (DTPGH), and 140–143 (NKMD).

This sequence belongs to the TRAFAC class translation factor GTPase superfamily. Classic translation factor GTPase family. EF-G/EF-2 subfamily.

Its subcellular location is the cytoplasm. In terms of biological role, catalyzes the GTP-dependent ribosomal translocation step during translation elongation. During this step, the ribosome changes from the pre-translocational (PRE) to the post-translocational (POST) state as the newly formed A-site-bound peptidyl-tRNA and P-site-bound deacylated tRNA move to the P and E sites, respectively. Catalyzes the coordinated movement of the two tRNA molecules, the mRNA and conformational changes in the ribosome. The chain is Elongation factor G from Bartonella tribocorum (strain CIP 105476 / IBS 506).